The sequence spans 64 residues: U2-aranetoxin-Av1a (64 aa).

Expressed in fat body, but not in cephalothorax, silk gland, midgut.

Its function is as follows. Insecticidal toxin. This Araneus ventricosus (Orbweaver spider) protein is U2-aranetoxin-Av1a.